The sequence spans 224 residues: Ribonuclease 3 (224 aa).

Positions 4–127 (IEKLEQSLTY…IIGAIHLEAG (124 aa)) constitute an RNase III domain. Residue E40 coordinates Mg(2+). D44 is an active-site residue. The Mg(2+) site is built by D113 and E116. E116 is an active-site residue. One can recognise a DRBM domain in the interval 154-223 (DYKTKLQEIT…AKIALEKLGA (70 aa)).

It belongs to the ribonuclease III family. In terms of assembly, homodimer. It depends on Mg(2+) as a cofactor.

It localises to the cytoplasm. It carries out the reaction Endonucleolytic cleavage to 5'-phosphomonoester.. Its function is as follows. Digests double-stranded RNA. Involved in the processing of primary rRNA transcript to yield the immediate precursors to the large and small rRNAs (23S and 16S). Processes some mRNAs, and tRNAs when they are encoded in the rRNA operon. Processes pre-crRNA and tracrRNA of type II CRISPR loci if present in the organism. This chain is Ribonuclease 3, found in Campylobacter jejuni subsp. jejuni serotype O:6 (strain 81116 / NCTC 11828).